The following is a 528-amino-acid chain: MLSKATLLLSLPFWARVANAAFGITTTSSSYVIDANSASPLKFTVNRSNCDITSINFYGAELQYQGTGSHIGSGLGSASVSATQSGDYIKVTCSTSTLTHYFVVHNGDPIIHMATHITAEPSIGELRFIARLNNELLPNEEPFGQVSNTAGGTAIEGSDVYLVNGQTRSKFYSSERFIDDHRHCVSGSAHRVCMILNQYESSSGGPFHRDINTNNGGQYNALYWYMNSGHAQTEANRMGLHGPYSMYFSRSGTPGTNIDTSFFANLDIKGYVPANARGKVSGKASGADSTFKWVVHWYNDEAQYWTYTASDGSFTSPAMKPGTYTMVYYQGEYKVASTSVSVSAGSTTTKNISGSVTTGKTIFKIGEWDGQPTGFRNAANQLRMHPSDSRMASWGPLTYTVGSSSLSDFPMAIFKSTNSPVTIKFTASSSQTGAATLRIGTTLSFAGGRPQAKVNSFTGPVPSAPKDLNSRGVTRGAYRGFGEVYDVAIPAGTIVAGTNTITISVVSGSSGDTFLSPNFIFDCVELFQ.

The first 20 residues, methionine 1–alanine 20, serve as a signal peptide directing secretion. Asparagine 46 carries an N-linked (GlcNAc...) asparagine glycan. 2 disulfides stabilise this stretch: cysteine 50–cysteine 93 and cysteine 184–cysteine 193. Asparagine 351 is a glycosylation site (N-linked (GlcNAc...) asparagine).

Belongs to the polysaccharide lyase 4 family.

It localises to the secreted. The catalysed reaction is Endotype eliminative cleavage of L-alpha-rhamnopyranosyl-(1-&gt;4)-alpha-D-galactopyranosyluronic acid bonds of rhamnogalacturonan I domains in ramified hairy regions of pectin leaving L-rhamnopyranose at the reducing end and 4-deoxy-4,5-unsaturated D-galactopyranosyluronic acid at the non-reducing end.. In terms of biological role, pectinolytic enzymes consist of four classes of enzymes: pectin lyase, polygalacturonase, pectin methylesterase and rhamnogalacturonase. Degrades the rhamnogalacturonan I (RG-I) backbone of pectin. The protein is Probable rhamnogalacturonate lyase A (rglA) of Neosartorya fischeri (strain ATCC 1020 / DSM 3700 / CBS 544.65 / FGSC A1164 / JCM 1740 / NRRL 181 / WB 181) (Aspergillus fischerianus).